Reading from the N-terminus, the 485-residue chain is Bcl-2-like protein 13 (485 aa).

Positions 14-30 (ETKYVVLSYLGLLSQEK) match the BH4 motif. Ser-38 bears the Phosphoserine mark. A BH3 motif is present at residues 100-116 (MEDCLAHLGEKVSQELK). Residues 147-157 (ASGWNKILVPL) carry the BH1 motif. Positions 193 to 206 (YIIQQGGWGTVFSL) match the BH2 motif. Residues 218-248 (AEDSNDIYILPSDNSGQVSPPESPTVTTSWQ) form a disordered region. The segment covering 229-248 (SDNSGQVSPPESPTVTTSWQ) has biased composition (polar residues). The stretch at 246 to 256 (SWQSESLPVSL) is one A repeat. Phosphoserine is present on residues Ser-259, Ser-261, Ser-303, Ser-326, Ser-371, Ser-375, Ser-410, Ser-420, Ser-426, Ser-429, and Ser-444. An A; approximate repeat occupies 261–271 (SWHTESLPVSL). Residues 418–451 (EESLVEELSPASEKKPVPPSEGKSRLSPAGEMKP) are disordered. One copy of the B repeat lies at 425 to 441 (LSPASEKKPVPPSEGKS). One copy of the B; approximate repeat lies at 443 to 459 (LSPAGEMKPMPLSEGKS). Residues 460-480 (ILLFGGAAAVAILAVAIGVAL) traverse the membrane as a helical segment.

It belongs to the Bcl-2 family. Monomer. As to expression, ubiquitous, with the highest levels of expression in heart, placenta and pancreas.

The protein resides in the mitochondrion membrane. The protein localises to the nucleus. Functionally, may promote the activation of caspase-3 and apoptosis. This Homo sapiens (Human) protein is Bcl-2-like protein 13 (BCL2L13).